Reading from the N-terminus, the 511-residue chain is Synaptotagmin-6 (511 aa).

Residues 1–59 are Vesicular-facing; that stretch reads MSGVWGAGGPRCQAALAVLASLCRARPPPLGLDVETCRSFELQSPEQSPSAADSGTSVS. The segment at 12 to 38 is cysteine motif; it reads CQAALAVLASLCRARPPPLGLDVETCR. Residues 60–80 traverse the membrane as a helical segment; that stretch reads LLAVVVIVCGVALVAVFLFLF. Over 81–511 the chain is Cytoplasmic; it reads WKLCWMPWRK…KSFKEGTPRL (431 aa). 2 disordered regions span residues 92–119 and 157–182; these read EASS…ADKL and TKLQ…LPRQ. Positions 94–103 are enriched in low complexity; that stretch reads SSPSSANPAS. Composition is skewed to polar residues over residues 104-113 and 160-172; these read ETLQSPSSRG and QRQT…STRH. A Phosphoserine modification is found at Ser217. C2 domains lie at 230 to 351 and 362 to 495; these read SCGK…SIWK and DLGE…AHWH. Residues Asp261, Asp267, Asp319, Phe320, Asp321, Ser324, Asp327, Asp393, Asp399, Asp453, and Asp455 each contribute to the Ca(2+) site. A necessary for cell membrane association (isoform 2) region spans residues 483–511; that stretch reads MLAYPRKPIAHWHSLVEVKKSFKEGTPRL.

The protein belongs to the synaptotagmin family. In terms of assembly, isoform 1: Homodimer; disulfide-linked via the cysteine motif. Isoform 1: Can also form heterodimers with SYT3, SYT7, SYT9 and SYT10. Isoform 1: Interacts with STX1A, STX1B and STX2; the interaction is Ca(2+)-dependent. Isoform 2: Is not able to form homodimer and heterodimers. It depends on Ca(2+) as a cofactor. As to expression, isoform 1 is expressed in the olfactory bulb. Isoform 2 is expressed in the brain (at protein level).

It localises to the cytoplasmic vesicle. The protein localises to the secretory vesicle. Its subcellular location is the synaptic vesicle membrane. The protein resides in the membrane. It is found in the cytoplasm. It localises to the cytosol. The protein localises to the cell membrane. In terms of biological role, may be involved in Ca(2+)-dependent exocytosis of secretory vesicles through Ca(2+) and phospholipid binding to the C2 domain or may serve as Ca(2+) sensors in the process of vesicular trafficking and exocytosis. May mediate Ca(2+)-regulation of exocytosis in acrosomal reaction in sperm. This Mus musculus (Mouse) protein is Synaptotagmin-6 (Syt6).